A 247-amino-acid chain; its full sequence is Coproheme decarboxylase (247 aa).

Residues Arg-129, 143–147 (YPMDK), His-170, Gln-183, and Ser-221 contribute to the Fe-coproporphyrin III site. Tyr-143 is an active-site residue.

It belongs to the ChdC family. Type 1 subfamily. Fe-coproporphyrin III serves as cofactor.

The enzyme catalyses Fe-coproporphyrin III + 2 H2O2 + 2 H(+) = heme b + 2 CO2 + 4 H2O. It carries out the reaction Fe-coproporphyrin III + H2O2 + H(+) = harderoheme III + CO2 + 2 H2O. The catalysed reaction is harderoheme III + H2O2 + H(+) = heme b + CO2 + 2 H2O. Its pathway is porphyrin-containing compound metabolism; protoheme biosynthesis. In terms of biological role, involved in coproporphyrin-dependent heme b biosynthesis. Catalyzes the decarboxylation of Fe-coproporphyrin III (coproheme) to heme b (protoheme IX), the last step of the pathway. The reaction occurs in a stepwise manner with a three-propionate intermediate. The polypeptide is Coproheme decarboxylase (Bacillus cytotoxicus (strain DSM 22905 / CIP 110041 / 391-98 / NVH 391-98)).